We begin with the raw amino-acid sequence, 627 residues long: DNA mismatch repair protein MutL (627 aa).

The segment at 363-397 (FAEPAAREPVAPRYSPAPASGSRPAAPWPNAQPGY) is disordered. Low complexity predominate over residues 364–387 (AEPAAREPVAPRYSPAPASGSRPA).

Belongs to the DNA mismatch repair MutL/HexB family.

Its function is as follows. This protein is involved in the repair of mismatches in DNA. It is required for dam-dependent methyl-directed DNA mismatch repair. May act as a 'molecular matchmaker', a protein that promotes the formation of a stable complex between two or more DNA-binding proteins in an ATP-dependent manner without itself being part of a final effector complex. The chain is DNA mismatch repair protein MutL from Shigella flexneri serotype 5b (strain 8401).